The chain runs to 296 residues: Sulfotransferase 1E1 (296 aa).

Residue Lys-49–Trp-54 participates in 3'-phosphoadenylyl sulfate binding. Lys-107–His-109 contacts substrate. His-109 functions as the Proton acceptor in the catalytic mechanism. 3'-phosphoadenylyl sulfate contacts are provided by residues Arg-131, Ser-139, Tyr-194, Thr-228–Met-233, and Arg-258–Gly-260.

The protein belongs to the sulfotransferase 1 family. As to quaternary structure, homodimer. Post-translationally, the N-terminus is blocked. As to expression, adrenal gland and much less in liver. Detectable only during pregnancy in uterine.

Its subcellular location is the cytoplasm. It localises to the cytosol. It carries out the reaction estrone + 3'-phosphoadenylyl sulfate = estrone 3-sulfate + adenosine 3',5'-bisphosphate + H(+). It catalyses the reaction (24S)-hydroxycholesterol + 3'-phosphoadenylyl sulfate = (24S)-hydroxycholesterol 3-sulfate + adenosine 3',5'-bisphosphate + H(+). The enzyme catalyses 17beta-estradiol + 3'-phosphoadenylyl sulfate = 17beta-estradiol 3-sulfate + adenosine 3',5'-bisphosphate + H(+). The catalysed reaction is 3beta-hydroxyandrost-5-en-17-one + 3'-phosphoadenylyl sulfate = dehydroepiandrosterone 3-sulfate + adenosine 3',5'-bisphosphate + H(+). It carries out the reaction 4-ethylphenol + 3'-phosphoadenylyl sulfate = 4-ethylphenyl sulfate + adenosine 3',5'-bisphosphate + H(+). Inhibited by estradiol. In terms of biological role, sulfotransferase that utilizes 3'-phospho-5'-adenylyl sulfate (PAPS) as sulfonate donor to catalyze the sulfate conjugation of estradiol and estrone. Is a key enzyme in estrogen homeostasis, the sulfation of estrogens leads to their inactivation. Also sulfates dehydroepiandrosterone (DHEA), pregnenolone, (24S)-hydroxycholesteroland xenobiotic compounds like ethinylestradiol, equalenin, diethyl stilbesterol and 1-naphthol at significantly lower efficiency. Does not sulfonate cortisol, testosterone and dopamine. May play a role in gut microbiota-host metabolic interaction. O-sulfonates 4-ethylphenol (4-EP), a dietary tyrosine-derived metabolite produced by gut bacteria. The product 4-EPS crosses the blood-brain barrier and may negatively regulate oligodendrocyte maturation and myelination, affecting the functional connectivity of different brain regions associated with the limbic system. In Cavia porcellus (Guinea pig), this protein is Sulfotransferase 1E1 (SULT1E1).